Reading from the N-terminus, the 158-residue chain is 6,7-dimethyl-8-ribityllumazine synthase (158 aa).

5-amino-6-(D-ribitylamino)uracil is bound by residues Phe-24, Ala-58–Glu-60, and Ala-82–Ile-84. Gly-87–Thr-88 contacts (2S)-2-hydroxy-3-oxobutyl phosphate. Residue His-90 is the Proton donor of the active site. Phe-115 lines the 5-amino-6-(D-ribitylamino)uracil pocket. Arg-129 contacts (2S)-2-hydroxy-3-oxobutyl phosphate.

Belongs to the DMRL synthase family. In terms of assembly, forms an icosahedral capsid composed of 60 subunits, arranged as a dodecamer of pentamers.

The enzyme catalyses (2S)-2-hydroxy-3-oxobutyl phosphate + 5-amino-6-(D-ribitylamino)uracil = 6,7-dimethyl-8-(1-D-ribityl)lumazine + phosphate + 2 H2O + H(+). The protein operates within cofactor biosynthesis; riboflavin biosynthesis; riboflavin from 2-hydroxy-3-oxobutyl phosphate and 5-amino-6-(D-ribitylamino)uracil: step 1/2. Its function is as follows. Catalyzes the formation of 6,7-dimethyl-8-ribityllumazine by condensation of 5-amino-6-(D-ribitylamino)uracil with 3,4-dihydroxy-2-butanone 4-phosphate. This is the penultimate step in the biosynthesis of riboflavin. The chain is 6,7-dimethyl-8-ribityllumazine synthase from Azotobacter vinelandii (strain DJ / ATCC BAA-1303).